We begin with the raw amino-acid sequence, 469 residues long: 3-isopropylmalate dehydratase large subunit (469 aa).

[4Fe-4S] cluster contacts are provided by Cys-350, Cys-410, and Cys-413.

Belongs to the aconitase/IPM isomerase family. LeuC type 1 subfamily. Heterodimer of LeuC and LeuD. [4Fe-4S] cluster is required as a cofactor.

It catalyses the reaction (2R,3S)-3-isopropylmalate = (2S)-2-isopropylmalate. The protein operates within amino-acid biosynthesis; L-leucine biosynthesis; L-leucine from 3-methyl-2-oxobutanoate: step 2/4. In terms of biological role, catalyzes the isomerization between 2-isopropylmalate and 3-isopropylmalate, via the formation of 2-isopropylmaleate. This chain is 3-isopropylmalate dehydratase large subunit, found in Rhizobium etli (strain ATCC 51251 / DSM 11541 / JCM 21823 / NBRC 15573 / CFN 42).